The sequence spans 851 residues: Pentatricopeptide repeat-containing protein At3g54980, mitochondrial (851 aa).

Residues 1 to 26 constitute a mitochondrion transit peptide; sequence MRSLLVFRKIPSRIRLRNLRNNKPFC. PPR repeat units lie at residues 162–196, 197–231, 232–266, 267–301, 303–337, 338–372, 373–407, 408–438, 442–476, 477–511, 512–546, 547–577, 583–617, 618–652, 653–687, 688–722, 723–757, 758–792, and 793–827; these read NSRAFNYLLNAYSKDRQTDHAVDIVNQMLELDVIP, FFPYVNRTLSALVQRNSLTEAKELYSRMVAIGVDG, DNVTTQLLMRASLREEKPAEALEVLSRAIERGAEP, DSLLYSLAVQACCKTLDLAMANSLLREMKEKKLCV, SQETYTSVILASVKQGNMDDAIRLKDEMLSDGISM, NVVAATSLITGHCKNNDLVSALVLFDKMEKEGPSP, NSVTFSVLIEWFRKNGEMEKALEFYKKMEVLGLTP, SVFHVHTIIQGWLKGQKHEEALKLFDESFET, NVFVCNTILSWLCKQGKTDEATELLSKMESRGIGP, NVVSYNNVMLGHCRQKNMDLARIVFSNILEKGLKP, NNYTYSILIDGCFRNHDEQNALEVVNHMTSSNIEV, NGVVYQTIINGLCKVGQTSKARELLANMIEE, SCMSYNSIIDGFFKEGEMDSAVAAYEEMCGNGISP, NVITYTSLMNGLCKNNRMDQALEMRDEMKNKGVKL, DIPAYGALIDGFCKRSNMESASALFSELLEEGLNP, SQPIYNSLISGFRNLGNMVAALDLYKKMLKDGLRC, DLGTYTTLIDGLLKDGNLILASELYTEMQAVGLVP, DEIIYTVIVNGLSKKGQFVKVVKMFEEMKKNNVTP, and NVLIYNAVIAGHYREGNLDEAFRLHDEMLDKGILP.

Belongs to the PPR family. P subfamily.

The protein localises to the mitochondrion. The sequence is that of Pentatricopeptide repeat-containing protein At3g54980, mitochondrial from Arabidopsis thaliana (Mouse-ear cress).